The following is a 297-amino-acid chain: ER membrane protein complex subunit 2-A (297 aa).

TPR repeat units lie at residues 87–120 (HRVK…DPTN), 155–188 (QEAW…NPHN), and 192–225 (YQQF…NNHN).

The protein belongs to the EMC2 family. Component of the ER membrane protein complex (EMC).

It localises to the endoplasmic reticulum membrane. In terms of biological role, part of the endoplasmic reticulum membrane protein complex (EMC) that enables the energy-independent insertion into endoplasmic reticulum membranes of newly synthesized membrane proteins. Preferentially accommodates proteins with transmembrane domains that are weakly hydrophobic or contain destabilizing features such as charged and aromatic residues. Involved in the cotranslational insertion of multi-pass membrane proteins in which stop-transfer membrane-anchor sequences become ER membrane spanning helices. It is also required for the post-translational insertion of tail-anchored/TA proteins in endoplasmic reticulum membranes. By mediating the proper cotranslational insertion of N-terminal transmembrane domains in an N-exo topology, with translocated N-terminus in the lumen of the ER, controls the topology of multi-pass membrane proteins. By regulating the insertion of various proteins in membranes, it is indirectly involved in many cellular processes. This is ER membrane protein complex subunit 2-A (emc2-a) from Xenopus laevis (African clawed frog).